We begin with the raw amino-acid sequence, 582 residues long: External alternative NADH-ubiquinone oxidoreductase, mitochondrial (582 aa).

The transit peptide at 1–30 (MLRLRPAVRAVSVARSVALTRSLHVSVAKF) directs the protein to the mitochondrion. A disordered region spans residues 46–65 (KQTAGHQGHHQEIPKPDENH). A compositionally biased stretch (basic and acidic residues) spans 54–65 (HHQEIPKPDENH). Residue 114–144 (TLVVLGSGWGSVSFLKKLDTSNYNVIVVSPR) participates in FAD binding. 277–313 (LHTVVVGGGPTGVEFAAELQDFFEDDLRKWIPDIRDD) is an NAD(+) binding site. A coiled-coil region spans residues 454–501 (LLNGIAKTEDLNNEITNLEKQSEHTFDEQERKNIFAQLESKSRKLRRS).

This sequence belongs to the NADH dehydrogenase family. Requires FAD as cofactor.

The protein localises to the mitochondrion inner membrane. The catalysed reaction is a quinone + NADH + H(+) = a quinol + NAD(+). It carries out the reaction a ubiquinone + NADH + H(+) = a ubiquinol + NAD(+). Its function is as follows. Alternative NADH-ubiquinone oxidoreductase which catalyzes the oxidation of mitochondrial NADH does not translocate protons across the inner mitochondrial membrane. The chain is External alternative NADH-ubiquinone oxidoreductase, mitochondrial (NDH2) from Yarrowia lipolytica (strain CLIB 122 / E 150) (Yeast).